The sequence spans 90 residues: UPF0367 protein P9301_01411 (90 aa).

This sequence belongs to the UPF0367 family.

This is UPF0367 protein P9301_01411 from Prochlorococcus marinus (strain MIT 9301).